Reading from the N-terminus, the 466-residue chain is MTSTTTQPTTQPMAKPKVAFAHLGCEKNRVDTEHMVGLLAEAGYGVSTDEEDASVVVVNTCSFIQDAREESVRTLVGLAEQGKELIIAGCLAQHFQEELLESIPEAKAIVGTGDYQHIVDVLQRVEAGERVNRVSAVPSFVGDEHLPRQRTTDQAVAYLKVAEGCDYRCAFCIIPKLRGDQRSRPIESIVAEAHQLAEQGVQELILISQITTNYGLDLYGKPKLAELLRALGEVEIPWIRVHYAYPTGLTASVVAAYRDVPNVVPYLDLPLQHSHPDVLRAMNRPWQADVNERLLNEIREQLPDAVLRTTLIVGFPGETEEHFQHLKHFLETQRFDHVGIFTFSPEDGTAAADLPNRVDPDVAQARKDALMALQQPIAAERNQRWVGKTVDVLIEQHNPQTGEMIGRCARFAPEVDGEVHVQPGDDGQQAAPGSFVPVKITGADIYDLTGHIVGARSMVAEARVKD.

The 112-residue stretch at 16–127 (PKVAFAHLGC…IVDVLQRVEA (112 aa)) folds into the MTTase N-terminal domain. 6 residues coordinate [4Fe-4S] cluster: cysteine 25, cysteine 61, cysteine 90, cysteine 165, cysteine 169, and cysteine 172. One can recognise a Radical SAM core domain in the interval 151-380 (TTDQAVAYLK…MALQQPIAAE (230 aa)). In terms of domain architecture, TRAM spans 383–454 (QRWVGKTVDV…IYDLTGHIVG (72 aa)).

The protein belongs to the methylthiotransferase family. RimO subfamily. It depends on [4Fe-4S] cluster as a cofactor.

It is found in the cytoplasm. It carries out the reaction L-aspartate(89)-[ribosomal protein uS12]-hydrogen + (sulfur carrier)-SH + AH2 + 2 S-adenosyl-L-methionine = 3-methylsulfanyl-L-aspartate(89)-[ribosomal protein uS12]-hydrogen + (sulfur carrier)-H + 5'-deoxyadenosine + L-methionine + A + S-adenosyl-L-homocysteine + 2 H(+). Catalyzes the methylthiolation of an aspartic acid residue of ribosomal protein uS12. The polypeptide is Ribosomal protein uS12 methylthiotransferase RimO (Synechococcus sp. (strain CC9902)).